Here is a 142-residue protein sequence, read N- to C-terminus: Ig heavy chain V region IR2 (142 aa).

The signal sequence occupies residues 1 to 19; that stretch reads MDLRLTYVFIVAILKGVLC. Residues 20–133 enclose the Ig-like domain; that stretch reads EVKLEESGGG…YSENWFVYWG (114 aa).

This is Ig heavy chain V region IR2 from Rattus norvegicus (Rat).